The primary structure comprises 611 residues: Chaperone protein HtpG (611 aa).

Residues 1 to 326 (MSETLERHAF…TEDLPLNVSR (326 aa)) are a; substrate-binding. A b region spans residues 327–536 (EMLQATPVLA…SGGPDLQMQR (210 aa)). Positions 537 to 611 (LLRRAGRGFG…RVAAALAAQA (75 aa)) are c.

Belongs to the heat shock protein 90 family. As to quaternary structure, homodimer.

It localises to the cytoplasm. Functionally, molecular chaperone. Has ATPase activity. The chain is Chaperone protein HtpG from Methylobacterium sp. (strain 4-46).